The sequence spans 411 residues: Bifunctional protein GlmU (411 aa).

The tract at residues Met-1 to Asn-204 is pyrophosphorylase. UTP-binding positions include Leu-6–Gly-9, Gln-74, and Gly-79. Positions 80, 132, 144, and 158 each coordinate N-acetyl-alpha-D-glucosamine 1-phosphate. A linker region spans residues Gly-205–Leu-224. The interval Lys-225–Lys-411 is N-acetyltransferase. His-308 (proton acceptor) is an active-site residue. Acetyl-CoA-binding residues include Ala-384 and Lys-401.

This sequence in the N-terminal section; belongs to the N-acetylglucosamine-1-phosphate uridyltransferase family. The protein in the C-terminal section; belongs to the transferase hexapeptide repeat family.

The enzyme catalyses N-acetyl-alpha-D-glucosamine 1-phosphate + UTP + H(+) = UDP-N-acetyl-alpha-D-glucosamine + diphosphate. It catalyses the reaction alpha-D-glucosamine 1-phosphate + acetyl-CoA = N-acetyl-alpha-D-glucosamine 1-phosphate + CoA + H(+). Its pathway is nucleotide-sugar biosynthesis; UDP-N-acetyl-alpha-D-glucosamine biosynthesis; N-acetyl-alpha-D-glucosamine 1-phosphate from alpha-D-glucosamine 6-phosphate (route II): step 2/2. The protein operates within nucleotide-sugar biosynthesis; UDP-N-acetyl-alpha-D-glucosamine biosynthesis; UDP-N-acetyl-alpha-D-glucosamine from N-acetyl-alpha-D-glucosamine 1-phosphate: step 1/1. Functionally, catalyzes the last two sequential reactions in the de novo biosynthetic pathway for UDP-N-acetyl-glucosamine (UDP-GlcNAc). Responsible for the acetylation of GlcN-1-P to GlcNAc-1-P, and for the uridyl transfer from UTP to GlcNAc-1-P, to produce UDP-GlcNAc and pyrophosphate. This chain is Bifunctional protein GlmU, found in Methanococcus aeolicus (strain ATCC BAA-1280 / DSM 17508 / OCM 812 / Nankai-3).